A 299-amino-acid polypeptide reads, in one-letter code: ATP phosphoribosyltransferase (299 aa).

This sequence belongs to the ATP phosphoribosyltransferase family. Long subfamily. It depends on Mg(2+) as a cofactor.

It localises to the cytoplasm. It carries out the reaction 1-(5-phospho-beta-D-ribosyl)-ATP + diphosphate = 5-phospho-alpha-D-ribose 1-diphosphate + ATP. Its pathway is amino-acid biosynthesis; L-histidine biosynthesis; L-histidine from 5-phospho-alpha-D-ribose 1-diphosphate: step 1/9. With respect to regulation, feedback inhibited by histidine. In terms of biological role, catalyzes the condensation of ATP and 5-phosphoribose 1-diphosphate to form N'-(5'-phosphoribosyl)-ATP (PR-ATP). Has a crucial role in the pathway because the rate of histidine biosynthesis seems to be controlled primarily by regulation of HisG enzymatic activity. The polypeptide is ATP phosphoribosyltransferase (Shewanella baltica (strain OS155 / ATCC BAA-1091)).